Here is a 337-residue protein sequence, read N- to C-terminus: 1-aminocyclopropane-1-carboxylate deaminase (337 aa).

Lysine 50 bears the N6-(pyridoxal phosphate)lysine mark. The active-site Nucleophile is the serine 77.

This sequence belongs to the ACC deaminase/D-cysteine desulfhydrase family. In terms of assembly, homotrimer. Pyridoxal 5'-phosphate serves as cofactor.

It catalyses the reaction 1-aminocyclopropane-1-carboxylate + H2O = 2-oxobutanoate + NH4(+). Catalyzes a cyclopropane ring-opening reaction, the irreversible conversion of 1-aminocyclopropane-1-carboxylate (ACC) to ammonia and alpha-ketobutyrate. Allows growth on ACC as a nitrogen source. This is 1-aminocyclopropane-1-carboxylate deaminase from Methylobacterium sp. (strain 4-46).